Consider the following 253-residue polypeptide: ER membrane protein complex subunit 3 (253 aa).

Transmembrane regions (helical) follow at residues 10–30, 126–146, and 176–196; these read WVLL…QYIM, FIPQ…FILM, and SISW…LIGL.

This sequence belongs to the EMC3 family. As to quaternary structure, component of the ER membrane protein complex (EMC), which is composed of EMC1, EMC2, EMC3, EMC4, EMC5 and EMC6.

Its subcellular location is the endoplasmic reticulum membrane. Functionally, the EMC seems to be required for efficient folding of proteins in the endoplasmic reticulum (ER). This chain is ER membrane protein complex subunit 3 (AIM27), found in Saccharomyces cerevisiae (strain RM11-1a) (Baker's yeast).